Consider the following 269-residue polypeptide: Hemin import ATP-binding protein HmuV (269 aa).

In terms of domain architecture, ABC transporter spans 5–242 (LDAEAASFAI…SLIRRVFDIA (238 aa)). 37-44 (GPNGAGKS) contributes to the ATP binding site.

Belongs to the ABC transporter superfamily. Heme (hemin) importer (TC 3.A.1.14.5) family. The complex is composed of two ATP-binding proteins (HmuV), two transmembrane proteins (HmuU) and a solute-binding protein (HmuT).

It localises to the cell inner membrane. Part of the ABC transporter complex HmuTUV involved in hemin import. Responsible for energy coupling to the transport system. In Rhodopseudomonas palustris (strain BisB18), this protein is Hemin import ATP-binding protein HmuV.